The following is a 247-amino-acid chain: Ubiquinone biosynthesis O-methyltransferase (247 aa).

Residues R41, G72, D93, and M136 each coordinate S-adenosyl-L-methionine.

It belongs to the methyltransferase superfamily. UbiG/COQ3 family.

It carries out the reaction a 3-demethylubiquinol + S-adenosyl-L-methionine = a ubiquinol + S-adenosyl-L-homocysteine + H(+). It catalyses the reaction a 3-(all-trans-polyprenyl)benzene-1,2-diol + S-adenosyl-L-methionine = a 2-methoxy-6-(all-trans-polyprenyl)phenol + S-adenosyl-L-homocysteine + H(+). It functions in the pathway cofactor biosynthesis; ubiquinone biosynthesis. Its function is as follows. O-methyltransferase that catalyzes the 2 O-methylation steps in the ubiquinone biosynthetic pathway. This chain is Ubiquinone biosynthesis O-methyltransferase, found in Bartonella quintana (strain Toulouse) (Rochalimaea quintana).